A 211-amino-acid polypeptide reads, in one-letter code: Imidazole glycerol phosphate synthase subunit HisH (211 aa).

Residues 3–211 (VVAVIDYEMG…VSQVREKIAA (209 aa)) form the Glutamine amidotransferase type-1 domain. The active-site Nucleophile is C81. Residues H186 and E188 contribute to the active site.

As to quaternary structure, heterodimer of HisH and HisF.

The protein localises to the cytoplasm. It carries out the reaction 5-[(5-phospho-1-deoxy-D-ribulos-1-ylimino)methylamino]-1-(5-phospho-beta-D-ribosyl)imidazole-4-carboxamide + L-glutamine = D-erythro-1-(imidazol-4-yl)glycerol 3-phosphate + 5-amino-1-(5-phospho-beta-D-ribosyl)imidazole-4-carboxamide + L-glutamate + H(+). It catalyses the reaction L-glutamine + H2O = L-glutamate + NH4(+). Its pathway is amino-acid biosynthesis; L-histidine biosynthesis; L-histidine from 5-phospho-alpha-D-ribose 1-diphosphate: step 5/9. IGPS catalyzes the conversion of PRFAR and glutamine to IGP, AICAR and glutamate. The HisH subunit catalyzes the hydrolysis of glutamine to glutamate and ammonia as part of the synthesis of IGP and AICAR. The resulting ammonia molecule is channeled to the active site of HisF. The sequence is that of Imidazole glycerol phosphate synthase subunit HisH from Trichormus variabilis (strain ATCC 29413 / PCC 7937) (Anabaena variabilis).